Reading from the N-terminus, the 32-residue chain is Ferredoxin (32 aa).

A 2Fe-2S ferredoxin-type domain is found at 3–32 (YKVRLLSEAEGIDVTIDCADDVYILDAAEE).

Belongs to the 2Fe2S plant-type ferredoxin family. [2Fe-2S] cluster serves as cofactor.

The protein resides in the plastid. Its subcellular location is the chloroplast. Its function is as follows. Ferredoxins are iron-sulfur proteins that transfer electrons in a wide variety of metabolic reactions. The sequence is that of Ferredoxin from Porphyridium purpureum (Red alga).